A 481-amino-acid polypeptide reads, in one-letter code: Glutamyl-tRNA(Gln) amidotransferase subunit A (481 aa).

Active-site charge relay system residues include K76 and S151. S175 acts as the Acyl-ester intermediate in catalysis.

Belongs to the amidase family. GatA subfamily. As to quaternary structure, heterotrimer of A, B and C subunits.

The catalysed reaction is L-glutamyl-tRNA(Gln) + L-glutamine + ATP + H2O = L-glutaminyl-tRNA(Gln) + L-glutamate + ADP + phosphate + H(+). Allows the formation of correctly charged Gln-tRNA(Gln) through the transamidation of misacylated Glu-tRNA(Gln) in organisms which lack glutaminyl-tRNA synthetase. The reaction takes place in the presence of glutamine and ATP through an activated gamma-phospho-Glu-tRNA(Gln). In Neisseria gonorrhoeae (strain NCCP11945), this protein is Glutamyl-tRNA(Gln) amidotransferase subunit A.